The chain runs to 270 residues: Formamidopyrimidine-DNA glycosylase (270 aa).

The active-site Schiff-base intermediate with DNA is the P2. E3 functions as the Proton donor in the catalytic mechanism. K58 acts as the Proton donor; for beta-elimination activity in catalysis. Residues H91, R110, and K151 each coordinate DNA. The FPG-type zinc-finger motif lies at 236-270 (FVYGRGGEACKVCGTELRNVVLGQRASVFCPRCQR). The active-site Proton donor; for delta-elimination activity is the R260.

This sequence belongs to the FPG family. As to quaternary structure, monomer. Requires Zn(2+) as cofactor.

It carries out the reaction Hydrolysis of DNA containing ring-opened 7-methylguanine residues, releasing 2,6-diamino-4-hydroxy-5-(N-methyl)formamidopyrimidine.. The enzyme catalyses 2'-deoxyribonucleotide-(2'-deoxyribose 5'-phosphate)-2'-deoxyribonucleotide-DNA = a 3'-end 2'-deoxyribonucleotide-(2,3-dehydro-2,3-deoxyribose 5'-phosphate)-DNA + a 5'-end 5'-phospho-2'-deoxyribonucleoside-DNA + H(+). Its function is as follows. Involved in base excision repair of DNA damaged by oxidation or by mutagenic agents. Acts as a DNA glycosylase that recognizes and removes damaged bases. Has a preference for oxidized purines, such as 7,8-dihydro-8-oxoguanine (8-oxoG). Has AP (apurinic/apyrimidinic) lyase activity and introduces nicks in the DNA strand. Cleaves the DNA backbone by beta-delta elimination to generate a single-strand break at the site of the removed base with both 3'- and 5'-phosphates. This chain is Formamidopyrimidine-DNA glycosylase, found in Pseudomonas fluorescens (strain SBW25).